Here is a 1499-residue protein sequence, read N- to C-terminus: Collagen alpha-2(V) chain (1499 aa).

A signal peptide spans 1-26; it reads MMANWAEARPLLILIVLLGQFVSIKA. Residues 39–97 enclose the VWFC domain; the sequence is IACTQNGQMYLNRDIWKPAPCQICVCDNGAILCDKIECQDVLDCADPVTPPGECCPVCS. Residues 104–1268 are disordered; the sequence is NTNFGRGRKG…DDKNKTDPGV (1165 aa). Pro residues predominate over residues 170 to 182; that stretch reads PGAPGPPGHPSHP. Positions 212–227 are enriched in low complexity; sequence PGSVGPVGPRGPQGLQ. Over residues 236–248 the composition is skewed to pro residues; the sequence is TGPPGEPGDPGPM. Residues Pro290, Pro293, and Pro296 each carry the hydroxyproline modification. Low complexity-rich tracts occupy residues 322–340 and 427–443; these read EAGP…PRGM and TPGA…SGPP. The Cell attachment site signature appears at 506 to 508; the sequence is RGD. Composition is skewed to low complexity over residues 604-626 and 694-709; these read SIGI…SGDP and DQGV…PLGP. Residues Pro611 and Pro617 each carry the hydroxyproline modification. Residues 710–721 are compositionally biased toward basic and acidic residues; the sequence is RGERGNPGERGE. Residues 732-741 show a composition bias toward gly residues; sequence GMAGGHGPDG. Low complexity predominate over residues 742–758; sequence PKGSPGPSGTPGDTGPP. Residues 776-787 show a composition bias toward basic and acidic residues; that stretch reads KGDRGGIGEKGA. Low complexity predominate over residues 826–841; the sequence is PPGSRGNPGSRGENGP. The segment covering 894–903 has biased composition (gly residues); it reads GLKGGRGTQG. Pro919 carries the post-translational modification 3-hydroxyproline; partial. Over residues 919 to 929 the composition is skewed to pro residues; sequence PPGPAGAPGPA. 6 consecutive short sequence motifs (cell attachment site) follow at residues 944–946, 1067–1069, 1070–1072, 1100–1102, 1127–1129, and 1136–1138; these read RGD. A compositionally biased stretch (basic and acidic residues) spans 1063 to 1072; it reads AVGERGDRGD. Residues 1093-1114 are compositionally biased toward low complexity; that stretch reads APGDAGQRGDPGSRGPIGPPGR. A compositionally biased stretch (basic and acidic residues) spans 1127–1141; the sequence is RGDKGDHGDRGDRGQ. At Pro1156 the chain carries 3-hydroxyproline; partial. Composition is skewed to pro residues over residues 1171-1181 and 1211-1226; these read PFGPRGPPGPV and EGPP…PGPP. Residues 1230-1499 constitute a propeptide, C-terminal propeptide; the sequence is TAALGDIMGH…GVEIGPVCFV (270 aa). N-linked (GlcNAc...) asparagine glycosylation is present at Asn1262. One can recognise a Fibrillar collagen NC1 domain in the interval 1266-1499; sequence PGVHATLKSL…GVEIGPVCFV (234 aa). 3 disulfide bridges follow: Cys1296/Cys1328, Cys1336/Cys1497, and Cys1405/Cys1450. Ca(2+)-binding residues include Asp1314, Asn1316, Gln1317, and Asp1322. An N-linked (GlcNAc...) asparagine glycan is attached at Asn1400.

Belongs to the fibrillar collagen family. As to quaternary structure, trimers of two alpha 1(V) and one alpha 2(V) chains in most tissues and trimers of one alpha 1(V), one alpha 2(V), and one alpha 3(V) chains in placenta. In terms of processing, prolines at the third position of the tripeptide repeating unit (G-X-P) are hydroxylated in some or all of the chains. Probably 3-hydroxylated on Pro-919 and Pro-1156 by LEPREL1.

It is found in the secreted. Its subcellular location is the extracellular space. The protein localises to the extracellular matrix. Functionally, type V collagen is a member of group I collagen (fibrillar forming collagen). It is a minor connective tissue component of nearly ubiquitous distribution. Type V collagen binds to DNA, heparan sulfate, thrombospondin, heparin, and insulin. Type V collagen is a key determinant in the assembly of tissue-specific matrices. The protein is Collagen alpha-2(V) chain (COL5A2) of Homo sapiens (Human).